Reading from the N-terminus, the 164-residue chain is Transcriptional regulator MraZ (164 aa).

SpoVT-AbrB domains follow at residues 7 to 60 (HFTN…EIDE) and 83 to 126 (SEIL…EPGR). Residues 141–164 (LRKQLSSRPVAPDAQPPRPHGARE) form a disordered region. Positions 154–164 (AQPPRPHGARE) are enriched in pro residues.

The protein belongs to the MraZ family. As to quaternary structure, forms oligomers.

Its subcellular location is the cytoplasm. The protein resides in the nucleoid. This chain is Transcriptional regulator MraZ, found in Beijerinckia indica subsp. indica (strain ATCC 9039 / DSM 1715 / NCIMB 8712).